The primary structure comprises 214 residues: Ribonuclease T (214 aa).

Positions 20-195 (VVVDVETAGF…YDTQQTAELF (176 aa)) constitute an Exonuclease domain. D23, E25, H182, and D187 together coordinate Mg(2+). H182 functions as the Proton donor/acceptor in the catalytic mechanism.

It belongs to the RNase T family. Homodimer. It depends on Mg(2+) as a cofactor.

Its function is as follows. Trims short 3' overhangs of a variety of RNA species, leaving a one or two nucleotide 3' overhang. Responsible for the end-turnover of tRNA: specifically removes the terminal AMP residue from uncharged tRNA (tRNA-C-C-A). Also appears to be involved in tRNA biosynthesis. The protein is Ribonuclease T of Vibrio campbellii (strain ATCC BAA-1116).